The sequence spans 684 residues: Early phosphoprotein p84 (684 aa).

5 disordered regions span residues 166 to 301 (LGGS…MSLP), 317 to 336 (SSAV…HHNA), 357 to 393 (VVSS…AAAT), 407 to 452 (RAPA…SPRF), and 569 to 657 (SNSS…GPSF). A compositionally biased stretch (basic and acidic residues) spans 180–191 (EQQRRRQEQRHE). Residues 201–220 (AGGGGGGGASGGGGGGGSGG) are compositionally biased toward gly residues. 2 stretches are compositionally biased toward basic and acidic residues: residues 232–245 (RDPR…ERRP) and 258–272 (REAK…HEGH). Residues 261-264 (KRQK) carry the Nuclear localization signal motif. Gly residues predominate over residues 285–296 (GGAGGGGGGGSG). The span at 326–335 (NHHHHHHHHN) shows a compositional bias: basic residues. A compositionally biased stretch (low complexity) spans 359 to 377 (SSPSSTSPSSLLSLPRPSS). Over residues 425-442 (STTPVSNCRVPPNSQESA) the composition is skewed to polar residues. The span at 578 to 587 (PLPPPPPPPG) shows a compositional bias: pro residues. Residues 598–608 (RGGGGGGGGGR) show a composition bias toward gly residues. Positions 612-622 (RQAASSSSSSS) are enriched in low complexity.

The protein belongs to the herpesviridae U79/UL112 family. Isoforms 1, 2, 3 and 4 interacts with themselves and with each other via their shared N-terminal regions; these interactions are important to both their intranuclear targeting and the recruitment of UL44 to subnuclear sites for viral replication.

The protein localises to the host nucleus. It localises to the virion. In terms of biological role, needed for efficient replication. Recruits the DNA polymerase processivity factor to pre-replication foci. This Homo sapiens (Human) protein is Early phosphoprotein p84 (UL112/UL113).